Here is a 78-residue protein sequence, read N- to C-terminus: Molt-inhibiting hormone (78 aa).

3 disulfides stabilise this stretch: Cys7/Cys44, Cys24/Cys40, and Cys27/Cys53.

The protein localises to the secreted. Inhibits Y-organs where molting hormone (ecdysteroid) is secreted. A molting cycle is initiated when MIH secretion diminishes or stops. Also has significant hyperglycemic hormone (CHH) activity. The polypeptide is Molt-inhibiting hormone (Cancer pagurus (Rock crab)).